Here is a 388-residue protein sequence, read N- to C-terminus: Succinate--CoA ligase [ADP-forming] subunit beta (388 aa).

Positions 9–244 (KDLLSSYDIA…PSQENVRDVL (236 aa)) constitute an ATP-grasp domain. ATP contacts are provided by residues Lys46, 53 to 55 (GRG), Val102, and Glu107. Mg(2+)-binding residues include Asn199 and Asp213. Residues Asn264 and 321–323 (GIM) each bind substrate.

It belongs to the succinate/malate CoA ligase beta subunit family. In terms of assembly, heterotetramer of two alpha and two beta subunits. It depends on Mg(2+) as a cofactor.

It carries out the reaction succinate + ATP + CoA = succinyl-CoA + ADP + phosphate. The catalysed reaction is GTP + succinate + CoA = succinyl-CoA + GDP + phosphate. The protein operates within carbohydrate metabolism; tricarboxylic acid cycle; succinate from succinyl-CoA (ligase route): step 1/1. In terms of biological role, succinyl-CoA synthetase functions in the citric acid cycle (TCA), coupling the hydrolysis of succinyl-CoA to the synthesis of either ATP or GTP and thus represents the only step of substrate-level phosphorylation in the TCA. The beta subunit provides nucleotide specificity of the enzyme and binds the substrate succinate, while the binding sites for coenzyme A and phosphate are found in the alpha subunit. This is Succinate--CoA ligase [ADP-forming] subunit beta from Chlamydia felis (strain Fe/C-56) (Chlamydophila felis).